The primary structure comprises 68 residues: Protein SlyX homolog (68 aa).

Belongs to the SlyX family.

The chain is Protein SlyX homolog from Pseudomonas fluorescens (strain ATCC BAA-477 / NRRL B-23932 / Pf-5).